The chain runs to 1707 residues: Latrophilin Cirl (1707 aa).

Residues 1–767 (MLPTILSISY…LFTMFDGNMR (767 aa)) are Extracellular-facing. The 90-residue stretch at 25–114 (ACEGKKLTIE…KYLEAHYQCI (90 aa)) folds into the SUEL-type lectin domain. Residue Asn-142 is glycosylated (N-linked (GlcNAc...) asparagine). Residues 176-301 (GLFNVPPQHT…TAASGAVVPG (126 aa)) are disordered. Composition is skewed to polar residues over residues 185–198 (TAVTHSTPSSSTTA) and 256–265 (NATSPSNTRI). Asn-256 carries an N-linked (GlcNAc...) asparagine glycan. Low complexity predominate over residues 275-285 (DDGTLLTTKSS). N-linked (GlcNAc...) asparagine glycosylation is found at Asn-302, Asn-341, Asn-398, Asn-655, Asn-703, and Asn-730. Residues 376–400 (YDEYDDDPSSTTPAPNGGDCLHNSS) are disordered. The GAIN-B domain occupies 561 to 754 (RSVVQKVKNI…AILMDVVDEH (194 aa)). Disulfide bonds link Cys-709-Cys-736 and Cys-724-Cys-738. The GPS stretch occupies residues 709 to 754 (CVFWNYIDHAWSANGCSLESTNRTHSVCSCNHLTNFAILMDVVDEH). A helical membrane pass occupies residues 768–788 (IFIYISIGICVVFIVIALLTL). Over 789 to 801 (KLFNGVFVKSART) the chain is Cytoplasmic. A helical transmembrane segment spans residues 802 to 822 (SIYTSIYLCLLAIELLFLLGI). At 823–828 (EQTETS) the chain is on the extracellular side. Residues 829-849 (IFCGFITIFLHCAILSGTAWF) traverse the membrane as a helical segment. At 850-875 (CYEAFHSYSTLTSDELLLEVDQTPKV) the chain is on the cytoplasmic side. The chain crosses the membrane as a helical span at residues 876–896 (NCYYLLSYGLSLSVVAISLVI). Over 897 to 920 (DPSTYTQNDYCVLMEANALFYATF) the chain is Extracellular. The helical transmembrane segment at 921–941 (VIPVLVFFVAAIGYTFLSWII) threads the bilayer. Over 942–968 (LCRKSRTGLKTKEHTRLASVRFDIRCS) the chain is Cytoplasmic. Residues 969 to 989 (FVFLLLLSAVWCSSYFYLRGA) form a helical membrane-spanning segment. The Extracellular portion of the chain corresponds to 990–999 (KMDDDTADVY). A helical transmembrane segment spans residues 1000 to 1020 (GYCFICFNTLLGLYIFVFHCI). Residues 1021–1707 (QNEKIRREYR…VRCYLEPLAK (687 aa)) lie on the Cytoplasmic side of the membrane. Ser-1156 carries the post-translational modification Phosphoserine. Disordered stretches follow at residues 1169–1188 (AHKQQQQQQQQQQGPLGEGY) and 1236–1260 (KPNSGQHGKKKRGAGGVPASPSGSL). Low complexity predominate over residues 1172–1181 (QQQQQQQQQQ). Residues Ser-1255 and Ser-1262 each carry the phosphoserine modification. Low complexity predominate over residues 1316–1326 (QQLHQQQQQQL). 4 disordered regions span residues 1316 to 1335 (QQLHQQQQQQLSSDEEQVEQ), 1450 to 1538 (GGGS…SDER), 1563 to 1582 (APLDYGALPPGSGPQPEHNG), and 1612 to 1687 (GGRL…QQRH). Phosphoserine is present on residues Ser-1327 and Ser-1328. The segment covering 1456–1481 (GGSVSSRSQQQQLKKQQQQQSLAQQR) has biased composition (low complexity). Composition is skewed to acidic residues over residues 1489-1503 (DDDDDEEEEEDEEAT) and 1513-1526 (CDEDEEEDESDLED). Residues 1635–1650 (QTPAQKRQQLQKLSPQ) show a composition bias toward polar residues. Positions 1651–1673 (STTSSSSHTSHSNPNPHPLQLTH) are enriched in low complexity. Basic residues predominate over residues 1674 to 1686 (PHPHQHPPHHQQR).

It belongs to the G-protein coupled receptor 2 family. LN-TM7 subfamily. As to quaternary structure, forms a heterodimer, consisting of a large extracellular region non-covalently linked to a seven-transmembrane moiety. Post-translationally, proteolytically cleaved into 2 subunits, an extracellular subunit and a seven-transmembrane subunit.

It localises to the cell membrane. The sequence is that of Latrophilin Cirl from Drosophila yakuba (Fruit fly).